Consider the following 340-residue polypeptide: Replication factor C subunit 3 (340 aa).

N-acetylserine is present on Ser2. ATP contacts are provided by residues 16 to 19 (VEKY), Arg20, Tyr28, 53 to 61 (GPPGTGKTS), Asn148, and Arg206.

The protein belongs to the activator 1 small subunits family. In terms of assembly, replication factor C (RFC) is a heteropentamer of subunits RFC1, RFC2, RFC3, RFC4 and RFC5 and forms a complex with POL30/PCNA in the presence of ATP. Component of the RAD24-RFC complex which consists of RAD14, RFC2, RFC3, RFC4 and RFC5 and associates with the checkpoint clamp DDC1:MEC3:RAD17 complex. Component of the ELG1-RFC complex which consists of ELG1, RFC2, RFC3, RFC4 and RFC5. Component of the CTF18-RFC complex, which consists of CTF18, CTF8, DCC1, RFC2, RFC3, RFC4 and RFC5. RFC3 interacts with ECO1 and POL30/PCNA.

It localises to the nucleus. In terms of biological role, component of ATP-dependent clamp loader (RFC and RFC-like) complexes for DNA clamps, such as the POL30/PCNA homotrimer and the checkpoint clamp DDC1:MEC3:RAD17 complex. During a clamp loading circle, the RFC:clamp complex binds to DNA and the recognition of the double-stranded/single-stranded junction stimulates ATP hydrolysis by RFC. The complex presumably provides bipartite ATP sites in which one subunit supplies a catalytic site for hydrolysis of ATP bound to the neighboring subunit. Dissociation of RFC from the clamp leaves the clamp encircling DNA. Component of the replication factor C (RFC or activator 1) complex which loads POL30/PCNA and acts during elongation of primed DNA templates by DNA polymerase delta and epsilon. RFC has an essential but redundant activity in sister chromatid cohesion establishment. Component of the RFC-like complex CTF18-RFC which is required for efficient establishment of chromosome cohesion during S-phase and may load or unload POL30/PCNA. Component of the RFC-like RAD24-RFC complex which loads the checkpoint clamp DDC1:MEC3:RAD17 complex and is involved in DNA repair pathways. Component of the RFC-like ELG1-RFC complex which appears to have a role in DNA replication, replication fork re-start, recombination and repair. RFC3 supplies a catalytic site to the ATP site of RFC4. This is Replication factor C subunit 3 (RFC3) from Saccharomyces cerevisiae (strain ATCC 204508 / S288c) (Baker's yeast).